Consider the following 468-residue polypeptide: 6-phospho-beta-galactosidase (468 aa).

Residues glutamine 19, histidine 116, asparagine 159, glutamate 160, and asparagine 297 each contribute to the D-galactose 6-phosphate site. Glutamate 160 functions as the Proton donor in the catalytic mechanism. The active-site Nucleophile is the glutamate 375. D-galactose 6-phosphate is bound by residues serine 428, tryptophan 429, lysine 435, and tyrosine 437.

Belongs to the glycosyl hydrolase 1 family.

The enzyme catalyses a 6-phospho-beta-D-galactoside + H2O = D-galactose 6-phosphate + an alcohol. The protein operates within carbohydrate metabolism; lactose degradation; D-galactose 6-phosphate and beta-D-glucose from lactose 6-phosphate: step 1/1. In Streptococcus pyogenes serotype M18 (strain MGAS8232), this protein is 6-phospho-beta-galactosidase.